The sequence spans 382 residues: Lactaldehyde reductase (382 aa).

Residues Asp38, Asn70, 97–98 (GS), 139–143 (TTAGT), Asn150, Lys161, and 180–184 (MMDGM) each bind NAD(+). The Fe cation site is built by Asp195, His199, His262, and His276.

It belongs to the iron-containing alcohol dehydrogenase family. Homodimer. Fe cation serves as cofactor.

The enzyme catalyses (R)-propane-1,2-diol + NAD(+) = (R)-lactaldehyde + NADH + H(+). It carries out the reaction (S)-propane-1,2-diol + NAD(+) = (S)-lactaldehyde + NADH + H(+). The protein operates within carbohydrate degradation; L-fucose degradation. The chain is Lactaldehyde reductase (fucO) from Escherichia coli O157:H7.